The following is a 363-amino-acid chain: Cytochrome P450 CYP82D47 (363 aa).

Cys342 serves as a coordination point for heme.

This sequence belongs to the cytochrome P450 family. It depends on heme as a cofactor.

Functionally, probable heme-thiolate monooxygenase. The sequence is that of Cytochrome P450 CYP82D47 from Panax ginseng (Korean ginseng).